The following is a 348-amino-acid chain: Dihydroorotase (348 aa).

The Zn(2+) site is built by His-17 and His-19. Substrate-binding positions include 19–21 (HLR) and Asn-45. The Zn(2+) site is built by Lys-103, His-140, and His-178. At Lys-103 the chain carries N6-carboxylysine. His-140 lines the substrate pocket. Residue Leu-223 participates in substrate binding. Residue Asp-251 participates in Zn(2+) binding. Asp-251 is an active-site residue. Residues His-255 and Ala-267 each coordinate substrate.

Belongs to the metallo-dependent hydrolases superfamily. DHOase family. Class II DHOase subfamily. As to quaternary structure, homodimer. Requires Zn(2+) as cofactor.

The catalysed reaction is (S)-dihydroorotate + H2O = N-carbamoyl-L-aspartate + H(+). Its pathway is pyrimidine metabolism; UMP biosynthesis via de novo pathway; (S)-dihydroorotate from bicarbonate: step 3/3. Its function is as follows. Catalyzes the reversible cyclization of carbamoyl aspartate to dihydroorotate. The chain is Dihydroorotase from Shigella flexneri.